The chain runs to 161 residues: DNA-directed RNA polymerase 19 kDa subunit (161 aa).

A compositionally biased stretch (acidic residues) spans 1–32 (MADTDDIIDYESDDLTEYEDDEEDGESLETSD). The disordered stretch occupies residues 1-35 (MADTDDIIDYESDDLTEYEDDEEDGESLETSDIDP).

The protein belongs to the poxviridae DNA-directed RNA polymerase 19 kDa subunit family. The DNA-dependent RNA polymerase used for intermediate and late genes expression consists of eight subunits Rpo30/OPG66, Rpo7/OPG90, Rpo22/OPG103, Rpo147/OPG105, Rpo18/OPG119, Rpo19/OPG131, Rpo132/OPG151 and Rpo35/OPG156. The same holoenzyme, with the addition of the transcription-specificity factor OPG109, is used for early gene expression.

It is found in the virion. The enzyme catalyses RNA(n) + a ribonucleoside 5'-triphosphate = RNA(n+1) + diphosphate. Part of the DNA-dependent RNA polymerase which catalyzes the transcription of viral DNA into RNA using the four ribonucleoside triphosphates as substrates. Responsible for the transcription of early, intermediate and late genes. DNA-dependent RNA polymerase associates with the early transcription factor (ETF), itself composed of OPG118 and OPG133, thereby allowing the early genes transcription. Late transcription, and probably also intermediate transcription, require newly synthesized RNA polymerase. This Monkeypox virus protein is DNA-directed RNA polymerase 19 kDa subunit (OPG131).